The following is a 64-amino-acid chain: Large ribosomal subunit protein bL35 (64 aa).

The protein belongs to the bacterial ribosomal protein bL35 family.

This is Large ribosomal subunit protein bL35 from Shewanella frigidimarina (strain NCIMB 400).